The following is a 377-amino-acid chain: Galactoside alpha-(1,2)-fucosyltransferase 1 (377 aa).

At 1 to 8 the chain is on the cytoplasmic side; it reads MWTPSRRQ. Residues 9–26 traverse the membrane as a helical; Signal-anchor for type II membrane protein segment; that stretch reads LCLAFLLVCVLSAGSFFF. The Lumenal segment spans residues 27-377; that stretch reads HLNGGNFFRN…WKPDSLFRLV (351 aa). Residues N67, N303, and N329 are each glycosylated (N-linked (GlcNAc...) asparagine).

Belongs to the glycosyltransferase 11 family. As to expression, in the adult, highly expressed in pancreas, testis and epididymis and to a lesser extent in thymus, lung, stomach, small intestine, colon, spleen and uterus. Not expressed in brain, heart, skeletal muscle, kidney, liver and bone marrow. Expressed in epididymis and testis.

Its subcellular location is the golgi apparatus. The protein localises to the golgi stack membrane. The enzyme catalyses a beta-D-galactosyl-(1-&gt;4)-N-acetyl-beta-D-glucosaminyl derivative + GDP-beta-L-fucose = an alpha-L-Fuc-(1-&gt;2)-beta-D-Gal-(1-&gt;4)-beta-D-GlcNAc derivative + GDP + H(+). The catalysed reaction is a ganglioside GA1 + GDP-beta-L-fucose = a ganglioside Fuc-GA1 + GDP + H(+). It carries out the reaction a beta-D-Gal-(1-&gt;3)-beta-D-GlcNAc-(1-&gt;3)-beta-D-Gal-(1-&gt;4)-beta-D-Glc-(1&lt;-&gt;1')-Cer(d18:1(4E)) + GDP-beta-L-fucose = alpha-L-fucosyl-(1-&gt;2)- beta-D-galactosyl-(1-&gt;3)-N-acetyl-beta-D-glucosaminyl-(1-&gt;3)-beta-D-galactosyl-(1-&gt;4)-beta-D-glucosyl-(1&lt;-&gt;1')-N-acylsphing-4-enine + GDP + H(+). It catalyses the reaction a neolactoside nLc4Cer(d18:1(4E)) + GDP-beta-L-fucose = a neolactoside IV(2)-alpha-Fuc-nLc4Cer(d18:1(4E)) + GDP + H(+). The enzyme catalyses a ganglioside GM1 + GDP-beta-L-fucose = a ganglioside Fuc-GM1 + GDP + H(+). The catalysed reaction is beta-D-galactosyl-(1-&gt;3)-N-acetyl-D-galactosamine + GDP-beta-L-fucose = alpha-L-fucosyl-(1-&gt;2)-beta-D-galactosyl-(1-&gt;3)-N-acetyl-D-galactosamine + GDP + H(+). It participates in protein modification; protein glycosylation. In terms of biological role, catalyzes the transfer of L-fucose, from a guanosine diphosphate-beta-L-fucose, to the terminal galactose residue of glycoconjugates through an alpha(1,2) linkage leading to H antigen synthesis that is an intermediate substrate in the synthesis of ABO blood group antigens. H antigen is essential for maturation of the glomerular layer of the main olfactory bulb, in cell migration and early cell-cell contacts during tumor associated angiogenesis. Preferentially fucosylates soluble lactose and to a lesser extent, fucosylates glycolipids gangliosides GA1 and GM1a. The polypeptide is Galactoside alpha-(1,2)-fucosyltransferase 1 (Mus musculus (Mouse)).